The following is a 688-amino-acid chain: MALLYLSTRSSLKKTGARCLSSSSILYRGQNLTEKIVQKYAVGLADDKKVFSGDYVTIKPAHCMSHDNSWPVATKFMGLGATNVHDNRQIVCTLDHDVQNKSEKNLEKYHNIENFAKEQGIDFYPAGRGIGHQIMIEEGYAYPLNLTVASDSHSNTYGGIGSLGTPIVRTDAASIWATGQTWWQIPPVAKVELVGQLPKGATGKDIIVALCGIFNNDEVLNHAIEFTGEGVKNLSVDYRLTIANMTTEWGALSGLFPVDETLVNFYDERVKKLPQPHPRVNENTVKNLSENKVNSDNDAVYAKHLVVDLSSLSPYISGPNSVKVSTSLHDLSKQNIKINKAYLVSCTNSRLSDIKAAADIIKGHKVAEGVEFYVAAASSNVQKDAEAIGAWQDIIDAGAKPLPAGCGPCIGLGTGLLEDGEVGISATNRNFKGRMGSKDALAYLASPEVVAASAVLGKIGGPEELQGNPVPTNPEIVRSITSNESTETVDPDASGSSVDVLDGFPQSIEGELILCDADNINTDGIYPGKYTYQDDIPRSKMAEVCMENYDSEFKQKTKAGDIIISGYNFGTGSSREQAATAILARDMKLVVAGSFGNIFSRNSINNALLTLEIPALINKLREKYAQSNELTIRTGWFLKWDVTKNQVTVSDSEGNLILTQKVGELGTNLQDIIVKGGLEGWVKAQLKN.

The transit peptide at 1–19 directs the protein to the mitochondrion; sequence MALLYLSTRSSLKKTGARC. The [4Fe-4S] cluster site is built by C346, C406, and C409.

It belongs to the aconitase/IPM isomerase family. [4Fe-4S] cluster is required as a cofactor.

It is found in the mitochondrion. It carries out the reaction (2R,3S)-homoisocitrate = cis-homoaconitate + H2O. Its pathway is amino-acid biosynthesis; L-lysine biosynthesis via AAA pathway; L-alpha-aminoadipate from 2-oxoglutarate: step 3/5. In terms of biological role, catalyzes the reversible hydration of cis-homoaconitate to (2R,3S)-homoisocitrate, a step in the alpha-aminoadipate pathway for lysine biosynthesis. This chain is Homoaconitase, mitochondrial (LYS4), found in Debaryomyces hansenii (strain ATCC 36239 / CBS 767 / BCRC 21394 / JCM 1990 / NBRC 0083 / IGC 2968) (Yeast).